The chain runs to 1337 residues: Phosphoribosylformylglycinamidine synthase (1337 aa).

A Phosphoserine modification is found at Ser-215. ATP contacts are provided by residues 322–333 and 402–404; these read GATTGTGGRIRD and AGF. 2 positions are modified to phosphothreonine: Thr-619 and Thr-622. Ala-705 serves as a coordination point for ATP. Positions 706, 745, 749, and 908 each coordinate Mg(2+). Ser-910 serves as a coordination point for ATP. Residues 1063–1301 form the Glutamine amidotransferase type-1 domain; it reads RVAILREEGS…ALMPHPERAV (239 aa). The active-site Nucleophile is Cys-1157. Active-site residues include His-1296 and Glu-1298.

This sequence in the N-terminal section; belongs to the FGAMS family.

Its subcellular location is the cytoplasm. It carries out the reaction N(2)-formyl-N(1)-(5-phospho-beta-D-ribosyl)glycinamide + L-glutamine + ATP + H2O = 2-formamido-N(1)-(5-O-phospho-beta-D-ribosyl)acetamidine + L-glutamate + ADP + phosphate + H(+). It functions in the pathway purine metabolism; IMP biosynthesis via de novo pathway; 5-amino-1-(5-phospho-D-ribosyl)imidazole from N(2)-formyl-N(1)-(5-phospho-D-ribosyl)glycinamide: step 1/2. Its function is as follows. Phosphoribosylformylglycinamidine synthase involved in the purines biosynthetic pathway. Catalyzes the ATP-dependent conversion of formylglycinamide ribonucleotide (FGAR) and glutamine to yield formylglycinamidine ribonucleotide (FGAM) and glutamate. In Mus musculus (Mouse), this protein is Phosphoribosylformylglycinamidine synthase (Pfas).